We begin with the raw amino-acid sequence, 316 residues long: BRCA2 and CDKN1A-interacting protein (316 aa).

Positions 1–57 are disordered; it reads MASKAKKRAVGNGIQRPLGAPGQREEEEEEEDEVEDEEEDEDDSDEEEDEVDEIVDE. A compositionally biased stretch (acidic residues) spans 25–57; it reads EEEEEEEDEVEDEEEDEDDSDEEEDEVDEIVDE. Phosphoserine is present on residues serine 44 and serine 114. An interaction with BRCA2 region spans residues 61–169; that stretch reads IEFEAYSISD…EQSMVEQLDK (109 aa). Residues 163 to 261 form an interaction with CDKN1A region; that stretch reads MVEQLDKLLN…NAEEEFFYEK (99 aa). Serine 283 carries the post-translational modification Phosphoserine.

It belongs to the BCP1 family. As to quaternary structure, interacts with BRCA2, CDKN1A and MTDH/LYRIC. Interacts with DCTN1/p150-glued and ACTR1A/ARP1. Interacts with alpha-, beta- and gamma-tubulins. Interacts with TENT5C; the interaction has no effect on TENT5C poly(A) polymerase function. Expressed in the testes (at protein level).

Its subcellular location is the nucleus. The protein resides in the cytoplasm. It is found in the cytoskeleton. It localises to the microtubule organizing center. The protein localises to the centrosome. Its subcellular location is the centriole. The protein resides in the spindle pole. During interphase, required for microtubule organizing and anchoring activities. During mitosis, required for the organization and stabilization of the spindle pole. May promote cell cycle arrest by enhancing the inhibition of CDK2 activity by CDKN1A. May be required for repair of DNA damage by homologous recombination in conjunction with BRCA2. May not be involved in non-homologous end joining (NHEJ). The polypeptide is BRCA2 and CDKN1A-interacting protein (Bccip) (Mus musculus (Mouse)).